The chain runs to 316 residues: tRNA dimethylallyltransferase (316 aa).

17–24 (GPTASGKT) contacts ATP. 19 to 24 (TASGKT) contacts substrate. Interaction with substrate tRNA stretches follow at residues 42-45 (DSAL), 166-170 (QRLSR), 247-252 (RCVGYR), and 280-287 (KRQITWLR).

Belongs to the IPP transferase family. In terms of assembly, monomer. The cofactor is Mg(2+).

It carries out the reaction adenosine(37) in tRNA + dimethylallyl diphosphate = N(6)-dimethylallyladenosine(37) in tRNA + diphosphate. Functionally, catalyzes the transfer of a dimethylallyl group onto the adenine at position 37 in tRNAs that read codons beginning with uridine, leading to the formation of N6-(dimethylallyl)adenosine (i(6)A). The protein is tRNA dimethylallyltransferase of Escherichia fergusonii (strain ATCC 35469 / DSM 13698 / CCUG 18766 / IAM 14443 / JCM 21226 / LMG 7866 / NBRC 102419 / NCTC 12128 / CDC 0568-73).